Reading from the N-terminus, the 241-residue chain is Sensory transduction protein LytT (241 aa).

A Response regulatory domain is found at 3-117 (RVLIVDDEML…RIQQTLKKYK (115 aa)). A 4-aspartylphosphate modification is found at Asp-54. Residues 137–241 (LALSVGESIV…AKELKKLLHI (105 aa)) enclose the HTH LytTR-type domain.

Post-translationally, phosphorylated by LytS.

It is found in the cytoplasm. Functionally, member of the two-component regulatory system LytS/LytT that probably regulates genes involved in cell wall metabolism. The protein is Sensory transduction protein LytT (lytT) of Bacillus subtilis (strain 168).